The following is a 359-amino-acid chain: 3-dehydroquinate synthase (359 aa).

Residues 71 to 76, 105 to 109, 129 to 130, Lys-142, and Lys-151 contribute to the NAD(+) site; these read DGEAYK, GVVGD, and TT. Zn(2+) contacts are provided by Glu-184, His-247, and His-264.

This sequence belongs to the sugar phosphate cyclases superfamily. Dehydroquinate synthase family. Co(2+) is required as a cofactor. It depends on Zn(2+) as a cofactor. The cofactor is NAD(+).

The protein localises to the cytoplasm. The catalysed reaction is 7-phospho-2-dehydro-3-deoxy-D-arabino-heptonate = 3-dehydroquinate + phosphate. It participates in metabolic intermediate biosynthesis; chorismate biosynthesis; chorismate from D-erythrose 4-phosphate and phosphoenolpyruvate: step 2/7. Catalyzes the conversion of 3-deoxy-D-arabino-heptulosonate 7-phosphate (DAHP) to dehydroquinate (DHQ). This chain is 3-dehydroquinate synthase, found in Burkholderia cenocepacia (strain ATCC BAA-245 / DSM 16553 / LMG 16656 / NCTC 13227 / J2315 / CF5610) (Burkholderia cepacia (strain J2315)).